A 250-amino-acid chain; its full sequence is tRNA (guanine-N(1)-)-methyltransferase (250 aa).

Residues Gly116 and 136–141 each bind S-adenosyl-L-methionine; that span reads IGDYVL.

The protein belongs to the RNA methyltransferase TrmD family. In terms of assembly, homodimer.

The protein resides in the cytoplasm. It carries out the reaction guanosine(37) in tRNA + S-adenosyl-L-methionine = N(1)-methylguanosine(37) in tRNA + S-adenosyl-L-homocysteine + H(+). Functionally, specifically methylates guanosine-37 in various tRNAs. This Pseudomonas putida (strain ATCC 700007 / DSM 6899 / JCM 31910 / BCRC 17059 / LMG 24140 / F1) protein is tRNA (guanine-N(1)-)-methyltransferase.